Reading from the N-terminus, the 503-residue chain is AMP phosphorylase (503 aa).

Residues glycine 168, 194 to 199, and serine 203 each bind AMP; that span reads SRAITG. Aspartate 256 (proton donor) is an active-site residue. AMP contacts are provided by serine 264 and lysine 288.

It belongs to the thymidine/pyrimidine-nucleoside phosphorylase family. Type 2 subfamily.

It carries out the reaction AMP + phosphate = alpha-D-ribose 1,5-bisphosphate + adenine. It catalyses the reaction CMP + phosphate = cytosine + alpha-D-ribose 1,5-bisphosphate. The catalysed reaction is UMP + phosphate = alpha-D-ribose 1,5-bisphosphate + uracil. Its function is as follows. Catalyzes the conversion of AMP and phosphate to adenine and ribose 1,5-bisphosphate (R15P). Exhibits phosphorylase activity toward CMP and UMP in addition to AMP. Functions in an archaeal AMP degradation pathway, together with R15P isomerase and RubisCO. In Methanocella arvoryzae (strain DSM 22066 / NBRC 105507 / MRE50), this protein is AMP phosphorylase.